The following is a 423-amino-acid chain: MALASGPAMRALAGSARLGLGGYGAPKRGAYEWGVRSTRKPEPRPLDRVYEIPGLEPITYEGKKHFVPWLAKPIFPPWERGWIDPRFHRAAPIHEQPLYKEQPCYIFHQRCRLLEGMKQALWLTKTKLIEGLPKKVLSLVDDPTNHIENQEQRVLDIISHSRLWHSTEDIPKRETYCPLIVDNLLQLCKSQIIKHPSLARRTSAQNCSLATTWNRESLLLQVRGTSSTMLSAKDPLPPIASREEVEATRSHVLETFYPISPTIDLQECHVYEVKEDTGFREGYPYPHPHTLYILEKANLRPQRFLPEQLRAKMLLFAFANALAQARLLYGNTARVLEQPIVVQSVGTDGRVFQFLVLQLNTTDLTSSEGVKNLVWTDSDQLLYQHFWCRPVIKKKVVVEPVGPVDFQPETFKKFLALYLHGAV.

A mitochondrion-targeting transit peptide spans 1–29 (MALASGPAMRALAGSARLGLGGYGAPKRG).

The protein belongs to the mitochondrion-specific ribosomal protein mL37 family. As to quaternary structure, component of the mitochondrial ribosome large subunit (39S) which comprises a 16S rRNA and about 50 distinct proteins.

The protein resides in the mitochondrion. The sequence is that of Large ribosomal subunit protein mL37 (Mrpl37) from Rattus norvegicus (Rat).